A 614-amino-acid chain; its full sequence is Vitamin B12 transporter BtuB (614 aa).

Positions 1–20 are cleaved as a signal peptide; sequence MIKKASLLTACSVTAFSAWA. The TonB box signature appears at 26–33; that stretch reads DTLVVTAN. In terms of domain architecture, TBDR plug spans 38–152; sequence PRSTVLAPTT…IGGVVNIITT (115 aa). Cyanocob(III)alamin-binding positions include Leu83, Ser85, Asn92, and 110–111; that span reads VS. In terms of domain architecture, TBDR beta-barrel spans 155-614; the sequence is HPGTEISAGW…EYTLXGSYTF (460 aa). The next 3 beta stranded transmembrane spans lie at 158–165, 169–178, and 184–195; these read TEISAGWG, YQNYDVSTQQ, and TRVTLLGDYAHT. Ca(2+) is bound by residues Asp199, Gln211, Asp213, and Asp215. Beta stranded transmembrane passes span 217–227 and 232–248; these read FLSKTLYGALE and DAWSGFVRGYGYDNRTN. Residues Tyr249 and Asp250 each contribute to the Ca(2+) site. Ala251 is a binding site for cyanocob(III)alamin. Asp261 provides a ligand contact to Ca(2+). The next 14 membrane-spanning stretches (beta stranded) occupy residues 263–277, 279–296, 309–325, 328–337, 353–369, 371–381, 385–400, 403–417, 434–443, 449–458, 473–490, 494–509, 517–529, and 535–550; these read RKLYSQSWDAGLRYN, ELIKSQLITSYSHSKDYN, TLDEMKQYTVQWANNII, HGNIGAGVDW, YDQRNTGIYLTGLQQVG, FTFEGAGRSDD, FGRHGTWQTSAGWEFI, YRFIASYGTSYKAPN, KSKQWEGAFE, VNWRISGYRN, YYNEGKARIKGVEATANF, PLTHTVSYDYVDARNA, RRAKQQVKYQLDW, and DWGITYQYLGTRYDKD. A cyanocob(III)alamin-binding site is contributed by Thr309. Cyanocob(III)alamin is bound at residue Arg517. A cyanocob(III)alamin-binding site is contributed by Tyr551. Beta stranded transmembrane passes span 558–572, 585–596, and 602–614; these read TVKMGGVSLWDLAVA, IANLFDKDYETV, and AGREYTLXGSYTF. Residues 597–614 carry the TonB C-terminal box motif; it reads YGYQTAGREYTLXGSYTF.

It belongs to the TonB-dependent receptor family. BtuB (TC 1.B.14.3.1) subfamily.

The protein localises to the cell outer membrane. In terms of biological role, involved in the active translocation of vitamin B12 (cyanocobalamin) across the outer membrane to the periplasmic space. It derives its energy for transport by interacting with the trans-periplasmic membrane protein TonB. The chain is Vitamin B12 transporter BtuB from Escherichia coli O6:H1 (strain CFT073 / ATCC 700928 / UPEC).